Reading from the N-terminus, the 251-residue chain is Hydroxypyruvate/pyruvate aldolase (251 aa).

The Proton acceptor role is filled by His44. Arg69 provides a ligand contact to 3-hydroxypyruvate. Glu145 is a binding site for Mg(2+). Thr170 and Asp171 together coordinate 3-hydroxypyruvate. Asp171 lines the Mg(2+) pocket.

Belongs to the HpcH/HpaI aldolase family. Homohexamer. Trimer of homodimers. The cofactor is Mn(2+). Requires Mg(2+) as cofactor. Co(2+) serves as cofactor. Zn(2+) is required as a cofactor.

The enzyme catalyses D-glyceraldehyde + 3-hydroxypyruvate = 2-dehydro-D-galactonate. The catalysed reaction is D-glyceraldehyde + pyruvate = 2-dehydro-3-deoxy-L-galactonate. It carries out the reaction L-glyceraldehyde + 3-hydroxypyruvate = (3S,4S,5S)-3,4,5,6-tetrahydroxy-2-oxohexanoate. It catalyses the reaction (R)-lactaldehyde + 3-hydroxypyruvate = (3S,4S,5R)-3,4,5-trihydroxy-2-oxohexanoate. The enzyme catalyses (R)-lactaldehyde + 3-hydroxypyruvate = (3S,4R,5R)-3,4,5-trihydroxy-2-oxohexanoate. The catalysed reaction is (S)-lactaldehyde + 3-hydroxypyruvate = (3S,4S,5S)-3,4,5-trihydroxy-2-oxohexanoate. It carries out the reaction D-erythrose + 3-hydroxypyruvate = (3S,4S,5R,6R)-3,4,5,6,7-pentahydroxy-2-oxoheptanoate. With respect to regulation, binding of substrate induces a dynamic movement of the metal cofactor between an inactive coordination sphere to a catalytically active one. When oxaloacetate is used as substrate, activity is increased in the presence of micromolar concentrations of inorganic phosphate. The phosphate does not improve the binding of the substrate, but exclusively increases its rate of decarboxylation. Excessive phosphate concentrations negatively affect the reaction rate by removing the metal cofactor. Its function is as follows. Aldolase which can catalyze in vitro the aldolisation reaction between hydroxypyruvate (HPA) or pyruvate (PA) and D-glyceraldehyde (D-GA). The condensation of hydroxypyruvate and D-glyceraldehyde produces 2-dehydro-D-galactonate as the major product. The condensation of pyruvate and D-glyceraldehyde produces 2-dehydro-3-deoxy-L-galactonate. Can use other electrophilic substrates such as L-glyceraldehyde, D- and L-lactaldehyde and D-erythrose. Also catalyzes the retro-aldol type decarboxylation of oxaloacetate, a general property of known pyruvate aldolases. The sequence is that of Hydroxypyruvate/pyruvate aldolase from Rhizorhabdus wittichii (strain DSM 6014 / CCUG 31198 / JCM 15750 / NBRC 105917 / EY 4224 / RW1) (Sphingomonas wittichii).